An 896-amino-acid chain; its full sequence is Bifunctional glutamine synthetase adenylyltransferase/adenylyl-removing enzyme (896 aa).

The segment at 1–411 (MSDNRLDTAR…LFNEILSEPE (411 aa)) is adenylyl removase. Positions 417 to 896 (NSEWQWAWQD…EVFGEEAATV (480 aa)) are adenylyl transferase.

Belongs to the GlnE family. The cofactor is Mg(2+).

The catalysed reaction is [glutamine synthetase]-O(4)-(5'-adenylyl)-L-tyrosine + phosphate = [glutamine synthetase]-L-tyrosine + ADP. It carries out the reaction [glutamine synthetase]-L-tyrosine + ATP = [glutamine synthetase]-O(4)-(5'-adenylyl)-L-tyrosine + diphosphate. In terms of biological role, involved in the regulation of glutamine synthetase GlnA, a key enzyme in the process to assimilate ammonia. When cellular nitrogen levels are high, the C-terminal adenylyl transferase (AT) inactivates GlnA by covalent transfer of an adenylyl group from ATP to specific tyrosine residue of GlnA, thus reducing its activity. Conversely, when nitrogen levels are low, the N-terminal adenylyl removase (AR) activates GlnA by removing the adenylyl group by phosphorolysis, increasing its activity. The regulatory region of GlnE binds the signal transduction protein PII (GlnB) which indicates the nitrogen status of the cell. The polypeptide is Bifunctional glutamine synthetase adenylyltransferase/adenylyl-removing enzyme (Neisseria meningitidis serogroup B (strain ATCC BAA-335 / MC58)).